A 445-amino-acid polypeptide reads, in one-letter code: MSDYLSVSALTKYIKYKFDQDPHLQSVLIKGELSNFKKHSSGHLYFNVKDKESVISAMMFKGSASKLNFEPKEGDEVLLEARVSVFERRGNYQIYVNKMQLDGIGNLYQKLEALKKKLTEEGCFDKANKKSIPKFPKKIAVLTASTGAAIRDIHSTINSRFPLAEQIQISTLVQGEKAKDDIIEKIEYADSLGVDTIIVGRGGGSIEDLWNFNEEAVVRAIYNCKTPIISAVGHETDFTLSDFAADIRAATPTQAAVIATPDQYELLQQIQQYQFTLTRFIKKHLEQQRKHVEHLSSYYKFKQPTLLYDQQIQRRDDLEKRLKQQIQATFEQQRHRLMLLQQRYNLKALLSSVNQEQQNNLQLTNQLVKLLNSKILSYKNDLKNKVENLNNLSPTNTMLRGYAIVNKKDEVITSTKDLTENDQLTLTMKDGLVDAKVTKVRCNND.

It belongs to the XseA family. As to quaternary structure, heterooligomer composed of large and small subunits.

It is found in the cytoplasm. The enzyme catalyses Exonucleolytic cleavage in either 5'- to 3'- or 3'- to 5'-direction to yield nucleoside 5'-phosphates.. In terms of biological role, bidirectionally degrades single-stranded DNA into large acid-insoluble oligonucleotides, which are then degraded further into small acid-soluble oligonucleotides. This chain is Exodeoxyribonuclease 7 large subunit, found in Staphylococcus aureus (strain USA300 / TCH1516).